A 294-amino-acid polypeptide reads, in one-letter code: Glycine--tRNA ligase alpha subunit (294 aa).

It belongs to the class-II aminoacyl-tRNA synthetase family. In terms of assembly, tetramer of two alpha and two beta subunits.

Its subcellular location is the cytoplasm. It carries out the reaction tRNA(Gly) + glycine + ATP = glycyl-tRNA(Gly) + AMP + diphosphate. This Trichormus variabilis (strain ATCC 29413 / PCC 7937) (Anabaena variabilis) protein is Glycine--tRNA ligase alpha subunit.